The following is a 107-amino-acid chain: MTSGEAERLRLTHLDHCRRHKCFARGSGEFCYFELPEEHIEGPAHGVRLTTQVELTRSLIREFTKRPLLVERERGPCVLTVVCNCPNPGLHQDLCCHLCAEYNKYRN.

The protein belongs to the adenoviridae E3A-2 family.

This chain is Early E3A 12.5 kDa protein, found in Homo sapiens (Human).